We begin with the raw amino-acid sequence, 87 residues long: Small ribosomal subunit protein uS15 (87 aa).

It belongs to the universal ribosomal protein uS15 family. Part of the 30S ribosomal subunit. Forms a bridge to the 50S subunit in the 70S ribosome, contacting the 23S rRNA.

One of the primary rRNA binding proteins, it binds directly to 16S rRNA where it helps nucleate assembly of the platform of the 30S subunit by binding and bridging several RNA helices of the 16S rRNA. Its function is as follows. Forms an intersubunit bridge (bridge B4) with the 23S rRNA of the 50S subunit in the ribosome. In Clostridium acetobutylicum (strain ATCC 824 / DSM 792 / JCM 1419 / IAM 19013 / LMG 5710 / NBRC 13948 / NRRL B-527 / VKM B-1787 / 2291 / W), this protein is Small ribosomal subunit protein uS15.